Here is a 147-residue protein sequence, read N- to C-terminus: Myoglobin (147 aa).

The region spanning 2 to 141 (ADHDLVLKCW…VIGDIDGYYK (140 aa)) is the Globin domain. Histidine 60 lines the nitrite pocket. Histidine 60 provides a ligand contact to O2. Histidine 89 provides a ligand contact to heme b.

Belongs to the globin family. As to quaternary structure, monomeric.

Its subcellular location is the cytoplasm. It localises to the sarcoplasm. The catalysed reaction is Fe(III)-heme b-[protein] + nitric oxide + H2O = Fe(II)-heme b-[protein] + nitrite + 2 H(+). It catalyses the reaction H2O2 + AH2 = A + 2 H2O. In terms of biological role, monomeric heme protein which primary function is to store oxygen and facilitate its diffusion within muscle tissues. Reversibly binds oxygen through a pentacoordinated heme iron and enables its timely and efficient release as needed during periods of heightened demand. Depending on the oxidative conditions of tissues and cells, and in addition to its ability to bind oxygen, it also has a nitrite reductase activity whereby it regulates the production of bioactive nitric oxide. Under stress conditions, like hypoxia and anoxia, it also protects cells against reactive oxygen species thanks to its pseudoperoxidase activity. This is Myoglobin (mb) from Danio rerio (Zebrafish).